A 428-amino-acid chain; its full sequence is Gamma-glutamyl phosphate reductase (428 aa).

This sequence belongs to the gamma-glutamyl phosphate reductase family.

The protein resides in the cytoplasm. It carries out the reaction L-glutamate 5-semialdehyde + phosphate + NADP(+) = L-glutamyl 5-phosphate + NADPH + H(+). It functions in the pathway amino-acid biosynthesis; L-proline biosynthesis; L-glutamate 5-semialdehyde from L-glutamate: step 2/2. Catalyzes the NADPH-dependent reduction of L-glutamate 5-phosphate into L-glutamate 5-semialdehyde and phosphate. The product spontaneously undergoes cyclization to form 1-pyrroline-5-carboxylate. The protein is Gamma-glutamyl phosphate reductase of Streptomyces avermitilis (strain ATCC 31267 / DSM 46492 / JCM 5070 / NBRC 14893 / NCIMB 12804 / NRRL 8165 / MA-4680).